A 158-amino-acid chain; its full sequence is Transcription elongation factor GreA (158 aa).

This sequence belongs to the GreA/GreB family.

Its function is as follows. Necessary for efficient RNA polymerase transcription elongation past template-encoded arresting sites. The arresting sites in DNA have the property of trapping a certain fraction of elongating RNA polymerases that pass through, resulting in locked ternary complexes. Cleavage of the nascent transcript by cleavage factors such as GreA or GreB allows the resumption of elongation from the new 3'terminus. GreA releases sequences of 2 to 3 nucleotides. The polypeptide is Transcription elongation factor GreA (Methylobacterium nodulans (strain LMG 21967 / CNCM I-2342 / ORS 2060)).